The sequence spans 156 residues: Snaclec subunit B (156 aa).

A signal peptide spans 1 to 23 (MGRSIFVNLGLLVVAFSLRGSEA). Intrachain disulfides connect cysteine 25–cysteine 36, cysteine 53–cysteine 144, and cysteine 119–cysteine 136. The C-type lectin domain maps to 32-145 (YDKYCYKVFD…CKSTLPFTCK (114 aa)).

Belongs to the snaclec family. In terms of assembly, heterodimer of subunits A and B; disulfide-linked. Expressed by the venom gland.

The protein resides in the secreted. Its function is as follows. Interferes with one step of hemostasis (modulation of platelet aggregation, or coagulation cascade, for example). This Philodryas olfersii (Green snake) protein is Snaclec subunit B.